The chain runs to 119 residues: Tubulin-specific chaperone A (119 aa).

This sequence belongs to the TBCA family. Supercomplex made of cofactors A to E. Cofactors A and D function by capturing and stabilizing tubulin in a quasi-native conformation. Cofactor E binds to the cofactor D-tubulin complex; interaction with cofactor C then causes the release of tubulin polypeptides that are committed to the native state.

The protein localises to the cytoplasm. Its subcellular location is the cytoskeleton. Functionally, required for the maintenance of microtubule structures and cell polarity. Beta-tubulin-folding protein; may have a regulatory role in the tubulin-folding pathway. This chain is Tubulin-specific chaperone A (alp31), found in Schizosaccharomyces pombe (strain 972 / ATCC 24843) (Fission yeast).